The sequence spans 274 residues: 3-methyl-2-oxobutanoate hydroxymethyltransferase (274 aa).

Positions 44 and 83 each coordinate Mg(2+). Residues 44-45 (DS), aspartate 83, and lysine 113 each bind 3-methyl-2-oxobutanoate. Glutamate 115 contacts Mg(2+). The Proton acceptor role is filled by glutamate 182.

It belongs to the PanB family. In terms of assembly, homodecamer; pentamer of dimers. It depends on Mg(2+) as a cofactor.

The protein localises to the cytoplasm. It carries out the reaction 3-methyl-2-oxobutanoate + (6R)-5,10-methylene-5,6,7,8-tetrahydrofolate + H2O = 2-dehydropantoate + (6S)-5,6,7,8-tetrahydrofolate. Its pathway is cofactor biosynthesis; (R)-pantothenate biosynthesis; (R)-pantoate from 3-methyl-2-oxobutanoate: step 1/2. Functionally, catalyzes the reversible reaction in which hydroxymethyl group from 5,10-methylenetetrahydrofolate is transferred onto alpha-ketoisovalerate to form ketopantoate. This Campylobacter jejuni (strain RM1221) protein is 3-methyl-2-oxobutanoate hydroxymethyltransferase.